The chain runs to 1072 residues: Error-prone DNA polymerase (1072 aa).

Belongs to the DNA polymerase type-C family. DnaE2 subfamily.

It is found in the cytoplasm. The enzyme catalyses DNA(n) + a 2'-deoxyribonucleoside 5'-triphosphate = DNA(n+1) + diphosphate. In terms of biological role, DNA polymerase involved in damage-induced mutagenesis and translesion synthesis (TLS). It is not the major replicative DNA polymerase. This Burkholderia pseudomallei (strain K96243) protein is Error-prone DNA polymerase.